We begin with the raw amino-acid sequence, 89 residues long: Small ribosomal subunit protein uS15 (89 aa).

This sequence belongs to the universal ribosomal protein uS15 family. Part of the 30S ribosomal subunit. Forms a bridge to the 50S subunit in the 70S ribosome, contacting the 23S rRNA.

In terms of biological role, one of the primary rRNA binding proteins, it binds directly to 16S rRNA where it helps nucleate assembly of the platform of the 30S subunit by binding and bridging several RNA helices of the 16S rRNA. Its function is as follows. Forms an intersubunit bridge (bridge B4) with the 23S rRNA of the 50S subunit in the ribosome. This Dictyoglomus turgidum (strain DSM 6724 / Z-1310) protein is Small ribosomal subunit protein uS15.